The following is a 263-amino-acid chain: Acetylglutamate kinase (263 aa).

Substrate-binding positions include Gly48–Gly49, Arg70, and Asn162.

The protein belongs to the acetylglutamate kinase family. ArgB subfamily.

The protein localises to the cytoplasm. The catalysed reaction is N-acetyl-L-glutamate + ATP = N-acetyl-L-glutamyl 5-phosphate + ADP. It functions in the pathway amino-acid biosynthesis; L-arginine biosynthesis; N(2)-acetyl-L-ornithine from L-glutamate: step 2/4. Functionally, catalyzes the ATP-dependent phosphorylation of N-acetyl-L-glutamate. This Vibrio vulnificus (strain CMCP6) protein is Acetylglutamate kinase.